The following is a 251-amino-acid chain: Ubiquinone/menaquinone biosynthesis C-methyltransferase UbiE (251 aa).

Residues threonine 74, aspartate 95, 123-124 (NA), and serine 140 contribute to the S-adenosyl-L-methionine site.

This sequence belongs to the class I-like SAM-binding methyltransferase superfamily. MenG/UbiE family.

The catalysed reaction is a 2-demethylmenaquinol + S-adenosyl-L-methionine = a menaquinol + S-adenosyl-L-homocysteine + H(+). It carries out the reaction a 2-methoxy-6-(all-trans-polyprenyl)benzene-1,4-diol + S-adenosyl-L-methionine = a 5-methoxy-2-methyl-3-(all-trans-polyprenyl)benzene-1,4-diol + S-adenosyl-L-homocysteine + H(+). It functions in the pathway quinol/quinone metabolism; menaquinone biosynthesis; menaquinol from 1,4-dihydroxy-2-naphthoate: step 2/2. The protein operates within cofactor biosynthesis; ubiquinone biosynthesis. Functionally, methyltransferase required for the conversion of demethylmenaquinol (DMKH2) to menaquinol (MKH2) and the conversion of 2-polyprenyl-6-methoxy-1,4-benzoquinol (DDMQH2) to 2-polyprenyl-3-methyl-6-methoxy-1,4-benzoquinol (DMQH2). The sequence is that of Ubiquinone/menaquinone biosynthesis C-methyltransferase UbiE from Yersinia pestis bv. Antiqua (strain Antiqua).